A 150-amino-acid polypeptide reads, in one-letter code: Macrodomain Ter protein (150 aa).

This sequence belongs to the MatP family. As to quaternary structure, homodimer.

It is found in the cytoplasm. Its function is as follows. Required for spatial organization of the terminus region of the chromosome (Ter macrodomain) during the cell cycle. Prevents early segregation of duplicated Ter macrodomains during cell division. Binds specifically to matS, which is a 13 bp signature motif repeated within the Ter macrodomain. The chain is Macrodomain Ter protein from Salmonella typhi.